Reading from the N-terminus, the 236-residue chain is Chloride intracellular channel protein 3 (236 aa).

The tract at residues 1–88 (MAETKLQLFV…EDFLEETLGP (88 aa)) is required for insertion into the membrane. The GST N-terminal domain occupies 12-90 (ASEDGESVGH…FLEETLGPPD (79 aa)). Residues 22-25 (CPSC) carry the G-site motif. Cys-22 and Cys-25 are oxidised to a cystine. The helical transmembrane segment at 24 to 44 (SCQRLFMVLLLKGVPFTLTTV) threads the bilayer. Phosphoserine is present on residues Ser-49 and Ser-159. A GST C-terminal domain is found at 68-235 (DSDAKTDTLQ…LAAYRPAVHP (168 aa)).

The protein belongs to the chloride channel CLIC family. As to quaternary structure, associated with the C-terminal of MAPK15. In terms of tissue distribution, detected in placenta (at protein level). Widely expressed. High expression is found in placenta followed by lung and heart. Low expression in skeletal muscle, kidney and pancreas.

Its subcellular location is the nucleus. It localises to the membrane. It is found in the cell membrane. The protein resides in the cytoplasm. The protein localises to the secreted. Its subcellular location is the extracellular space. It localises to the extracellular matrix. It catalyses the reaction chloride(in) = chloride(out). Inhibited by rapamycin, amphotericin B and IAA-94. Its function is as follows. In the soluble state, catalyzes glutaredoxin-like thiol disulfide exchange reactions with reduced glutathione as electron donor. Reduced in a glutathione-dependent way and secreted into the extracellular matrix where it activates TGM2 and promotes blood vessel growth during tissue remodeling as occurs in tumorigenesis. Can reduce specific cysteines in TGM2 and regulate cofactor binding. Can insert into membranes and form outwardly rectifying chloride ion channels. May participate in cellular growth control. This is Chloride intracellular channel protein 3 from Homo sapiens (Human).